The following is a 369-amino-acid chain: Chaperone protein DnaJ (369 aa).

In terms of domain architecture, J spans 7 to 73 (DYYEILGVPR…QKRAMYDRFG (67 aa)). The segment at 143–225 (GAEIPVEYER…CGGSGRVLRK (83 aa)) adopts a CR-type zinc-finger fold. The Zn(2+) site is built by Cys-156, Cys-159, Cys-173, Cys-176, Cys-199, Cys-202, Cys-213, and Cys-216. 4 CXXCXGXG motif repeats span residues 156–163 (CPRCGGTG), 173–180 (CPSCGGTG), 199–206 (CERCGGTG), and 213–220 (CHECGGSG).

It belongs to the DnaJ family. Homodimer. Zn(2+) is required as a cofactor.

It localises to the cytoplasm. In terms of biological role, participates actively in the response to hyperosmotic and heat shock by preventing the aggregation of stress-denatured proteins and by disaggregating proteins, also in an autonomous, DnaK-independent fashion. Unfolded proteins bind initially to DnaJ; upon interaction with the DnaJ-bound protein, DnaK hydrolyzes its bound ATP, resulting in the formation of a stable complex. GrpE releases ADP from DnaK; ATP binding to DnaK triggers the release of the substrate protein, thus completing the reaction cycle. Several rounds of ATP-dependent interactions between DnaJ, DnaK and GrpE are required for fully efficient folding. Also involved, together with DnaK and GrpE, in the DNA replication of plasmids through activation of initiation proteins. The sequence is that of Chaperone protein DnaJ from Thermotoga maritima (strain ATCC 43589 / DSM 3109 / JCM 10099 / NBRC 100826 / MSB8).